Consider the following 727-residue polypeptide: E3 SUMO-protein ligase pli1 (727 aa).

One can recognise an SAP domain in the interval 18-52 (ETGLIIPQLKDILRVFGLRLSGTKAELITRIKQLI). The PINIT domain maps to 108–261 (YSRPFAPVVH…SVVVCFVKVY (154 aa)). The SP-RING-type zinc-finger motif lies at 290–371 (QDADIIATST…MQHILESTPS (82 aa)). The Zn(2+) site is built by cysteine 321, histidine 323, cysteine 344, and cysteine 347. A phosphoserine mark is found at serine 395 and serine 396. 2 disordered regions span residues 408–558 (ELSD…TQHS) and 706–727 (QSNN…QSID). 2 stretches are compositionally biased toward polar residues: residues 417 to 435 (TMAN…THNS) and 459 to 494 (VATS…NRST). The segment covering 546-558 (SQQNNNNSNTQHS) has biased composition (low complexity).

Belongs to the PIAS family. In terms of assembly, interacts with hus5/ubc9.

It is found in the nucleus. It functions in the pathway protein modification; protein sumoylation. Its function is as follows. Acts as an E3 ligase mediating SUMO/Smt3 attachment to other proteins. Involved in the maintenance of the centromere and in telomere length. Regulates recombination, via extension sumoylation, particularly within the heterochromatin repeats. In Schizosaccharomyces pombe (strain 972 / ATCC 24843) (Fission yeast), this protein is E3 SUMO-protein ligase pli1 (pli1).